We begin with the raw amino-acid sequence, 373 residues long: SH3 domain-binding protein 5-like (373 aa).

The interval 1–53 (MEGKEGPSCEVRLPTPGAEREGPIHPELGAFGETASNTIKLSESSNDGKKEEI) is disordered. A compositionally biased stretch (polar residues) spans 34-45 (TASNTIKLSESS). Coiled-coil stretches lie at residues 55–98 (EELD…ESAR) and 170–272 (WQEM…SEEI). Disordered stretches follow at residues 276–305 (RTQSSLLSQRAPPLGAEAPPSVKDGETGPP) and 344–373 (TGAVECGGSRERGGDRGTGGAFRHHRSVSL). Residues 344 to 358 (TGAVECGGSRERGGD) show a composition bias toward basic and acidic residues.

It belongs to the SH3BP5 family.

Functionally, functions as a guanine nucleotide exchange factor (GEF) for rab11a. The chain is SH3 domain-binding protein 5-like (sh3bp5l) from Xenopus tropicalis (Western clawed frog).